A 143-amino-acid chain; its full sequence is Large ribosomal subunit protein uL16 (143 aa).

Belongs to the universal ribosomal protein uL16 family. In terms of assembly, part of the 50S ribosomal subunit.

Functionally, binds 23S rRNA and is also seen to make contacts with the A and possibly P site tRNAs. This Thermosynechococcus vestitus (strain NIES-2133 / IAM M-273 / BP-1) protein is Large ribosomal subunit protein uL16.